Here is a 486-residue protein sequence, read N- to C-terminus: Aspartyl/glutamyl-tRNA(Asn/Gln) amidotransferase subunit B (486 aa).

It belongs to the GatB/GatE family. GatB subfamily. Heterotrimer of A, B and C subunits.

The enzyme catalyses L-glutamyl-tRNA(Gln) + L-glutamine + ATP + H2O = L-glutaminyl-tRNA(Gln) + L-glutamate + ADP + phosphate + H(+). The catalysed reaction is L-aspartyl-tRNA(Asn) + L-glutamine + ATP + H2O = L-asparaginyl-tRNA(Asn) + L-glutamate + ADP + phosphate + 2 H(+). Allows the formation of correctly charged Asn-tRNA(Asn) or Gln-tRNA(Gln) through the transamidation of misacylated Asp-tRNA(Asn) or Glu-tRNA(Gln) in organisms which lack either or both of asparaginyl-tRNA or glutaminyl-tRNA synthetases. The reaction takes place in the presence of glutamine and ATP through an activated phospho-Asp-tRNA(Asn) or phospho-Glu-tRNA(Gln). This chain is Aspartyl/glutamyl-tRNA(Asn/Gln) amidotransferase subunit B, found in Azoarcus sp. (strain BH72).